The chain runs to 179 residues: GTP-dependent dephospho-CoA kinase (179 aa).

Positions 49, 50, 51, 68, 70, and 126 each coordinate GTP.

It belongs to the GTP-dependent DPCK family.

It carries out the reaction 3'-dephospho-CoA + GTP = GDP + CoA + H(+). It participates in cofactor biosynthesis; coenzyme A biosynthesis. In terms of biological role, catalyzes the GTP-dependent phosphorylation of the 3'-hydroxyl group of dephosphocoenzyme A to form coenzyme A (CoA). The protein is GTP-dependent dephospho-CoA kinase of Pyrococcus abyssi (strain GE5 / Orsay).